The chain runs to 525 residues: uncharacterized protein (525 aa).

Transmembrane regions (helical) follow at residues 28-48 (FIDVHVANISVAAFLTPNLII) and 353-373 (GVNALLAAIGAEIGANILFTP). A Pterin-binding domain is found at 146–394 (DIKIGKLKVG…ELKIASKMMF (249 aa)).

It is found in the cell membrane. Functionally, unknown. Does not possess dihydropteroate synthase (DHPS) activity since it does not catalyze the condensation of 6-hydroxymethyl-7,8-dihydropterin pyrophosphate (DHPP) and 4-aminobenzoate to form 7,8-dihydropteroate. This is an uncharacterized protein from Methanocaldococcus jannaschii (strain ATCC 43067 / DSM 2661 / JAL-1 / JCM 10045 / NBRC 100440) (Methanococcus jannaschii).